Consider the following 299-residue polypeptide: MIESKRLRIAMQKSGRLSQESQALLKQCGVKINLQEQRLIAYAENMPIDILRVRDDDIPGLVFDGVVDLGIIGENVLEEEELTRQAAGETVNYKKLRRLDFGGCRLSIAIPQDEAYNGISDLKNARIATSYPNLLKRYMQQQGVDFKTCSLTGSVEVAPRAGLADAICDLVSSGATLEANGLKEVEIIYRSKSCLIQRAAELSPEKQALVDKLLTRIQGVQQAAESKYIMLHAPKEKLEEITALLPGVENPTILPLAHDNSKVAMHVVSQENLFWETMEQLKDAGASSILVLPIEKMMG.

The protein belongs to the ATP phosphoribosyltransferase family. Long subfamily. Mg(2+) is required as a cofactor.

Its subcellular location is the cytoplasm. It carries out the reaction 1-(5-phospho-beta-D-ribosyl)-ATP + diphosphate = 5-phospho-alpha-D-ribose 1-diphosphate + ATP. It participates in amino-acid biosynthesis; L-histidine biosynthesis; L-histidine from 5-phospho-alpha-D-ribose 1-diphosphate: step 1/9. Its activity is regulated as follows. Feedback inhibited by histidine. In terms of biological role, catalyzes the condensation of ATP and 5-phosphoribose 1-diphosphate to form N'-(5'-phosphoribosyl)-ATP (PR-ATP). Has a crucial role in the pathway because the rate of histidine biosynthesis seems to be controlled primarily by regulation of HisG enzymatic activity. The protein is ATP phosphoribosyltransferase (hisG) of Pasteurella multocida (strain Pm70).